Consider the following 492-residue polypeptide: Histone-lysine N-methyltransferase ASHH1 (492 aa).

The region spanning 36 to 87 is the AWS domain; the sequence is EDISICECKFDFGDPDSACGERCLNVITNTECTPGYCPCGVYCKNQKFQKCE. Residues 84-206 enclose the SET domain; sequence QKCEYAKTKL…PRTELAYDYN (123 aa). In terms of domain architecture, Post-SET spans 213 to 229; it reads AKVRCLCGAVACSGFLG. The segment at 259 to 340 is disordered; sequence SAEDELTSEP…NSQEDSSPKT (82 aa). Polar residues predominate over residues 266–275; that stretch reads SEPSKNGESN. Residues 277–290 show a composition bias toward basic and acidic residues; the sequence is NEEKEKDISTENHL. A compositionally biased stretch (polar residues) spans 291 to 306; sequence ESTALNIQQQSDSTPT. Residues 317–326 are compositionally biased toward basic and acidic residues; that stretch reads VKTETSEDMK. Residues 328–339 show a composition bias toward polar residues; sequence LSQNSQEDSSPK.

This sequence belongs to the class V-like SAM-binding methyltransferase superfamily. Histone-lysine methyltransferase family. SET2 subfamily.

The protein localises to the nucleus. The protein resides in the chromosome. It is found in the centromere. The enzyme catalyses L-lysyl(4)-[histone H3] + 3 S-adenosyl-L-methionine = N(6),N(6),N(6)-trimethyl-L-lysyl(4)-[histone H3] + 3 S-adenosyl-L-homocysteine + 3 H(+). Its function is as follows. Histone methyltransferase involved in regulation of flowering time. Required for the expression of the SOC1/AGL20 gene. Required for histone H3 trimethylation on 'Lys-4' (H3K4me3) at the SOC1 locus. Prevents trimethylation on 'Lys-27' (H3K27me3) at the same locus. The protein is Histone-lysine N-methyltransferase ASHH1 (ASHH1) of Arabidopsis thaliana (Mouse-ear cress).